The chain runs to 180 residues: Fucolectin-2 (180 aa).

A signal peptide spans 1–22; it reads MKVKMIMLLFQILAILTLKSDS. The segment at 31–179 is F5/8 type C-like; sequence QENVALRGRA…VEVNVLFPAP (149 aa). Ca(2+) contacts are provided by Asn-58, Asp-61, Asn-63, and Ser-72. Intrachain disulfides connect Cys-73/Cys-168, Cys-104/Cys-105, and Cys-130/Cys-146. Alpha-L-fucose-binding residues include His-75 and Arg-101. The short motif at 101 to 103 is the Cell attachment site element; it reads RGD. Arg-108 contributes to the alpha-L-fucose binding site. 2 residues coordinate Ca(2+): Cys-168 and Glu-169.

The protein belongs to the fucolectin family. Homotrimer. In terms of tissue distribution, parenchymal hepatocytes.

Its subcellular location is the secreted. It localises to the extracellular space. In terms of biological role, acts as a defensive agent. Recognizes blood group fucosylated oligosaccharides including A, B, H and Lewis B-type antigens. Does not recognize Lewis A antigen and has low affinity for monovalent haptens. This Anguilla japonica (Japanese eel) protein is Fucolectin-2.